Consider the following 174-residue polypeptide: MRDLQQLLDELKDMSFFNPGEMCIIGCSTSEVIGKRIGSVGSMDVAKEIYENLKQLEIDTGVTFAFQGCEHINRAVTIERANFNPLTMEEVTVVPDVHAGGSLSTYAYQQMEDPIVVEHITVSKGIDIGQTLIGMHIKHVCVPVRTSVKQIGEAIVTIATSRPKKIGGERAKYQ.

Belongs to the UPF0340 family.

The polypeptide is UPF0340 protein SE_1711 (Staphylococcus epidermidis (strain ATCC 12228 / FDA PCI 1200)).